The primary structure comprises 209 residues: Glutathione S-transferase 1-1 (209 aa).

Residues 1 to 81 (MADFYYLPGS…YLVEKYGKTD (81 aa)) enclose the GST N-terminal domain. Glutathione is bound by residues serine 10, 51 to 53 (HTI), and 65 to 67 (ESR). The region spanning 87–209 (CPKKRAVINQ…GCLEFKKFFE (123 aa)) is the GST C-terminal domain.

This sequence belongs to the GST superfamily. Theta family. Homodimer.

The catalysed reaction is RX + glutathione = an S-substituted glutathione + a halide anion + H(+). It carries out the reaction 1,1,1-trichloro-2,2-bis(4-chlorophenyl)ethane = 1,1-dichloro-2,2-bis(4-chlorophenyl)ethylene + chloride + H(+). Conjugation of reduced glutathione to a wide number of exogenous and endogenous hydrophobic electrophiles. Has DDT dehydrochlorinase activity. This Drosophila sechellia (Fruit fly) protein is Glutathione S-transferase 1-1 (GstD1).